A 1070-amino-acid chain; its full sequence is 3',5'-cyclic-AMP phosphodiesterase (1070 aa).

4 disordered regions span residues 1-91, 166-215, 487-516, and 615-653; these read MSQE…KQDS, STSI…TRFQ, VPAS…LSQG, and SAGQ…RLPT. Low complexity predominate over residues 51–69; that stretch reads KQVQVQSQKFSSTSSTTKV. A compositionally biased stretch (polar residues) spans 70–84; it reads ATHSFSMSSSAGTTG. The span at 166–210 shows a compositional bias: low complexity; the sequence is STSIITSSEQRTSTSTSSSSSTRYIASGSSNLAGGNSNSASSASS. Residues 488 to 506 show a composition bias toward polar residues; the sequence is PASNKSRRPNQSSSASRSG. In terms of domain architecture, PDEase spans 656–985; the sequence is VETPRENELG…DYYQSMIPPS (330 aa). His-732 acts as the Proton donor in catalysis. A 3',5'-cyclic AMP-binding site is contributed by 732–736; that stretch reads HNSLH. A divalent metal cation-binding residues include His-736, His-772, Asp-773, and Asp-890. Asp-773, Asp-890, and Gln-941 together coordinate 3',5'-cyclic AMP. Positions 1007–1024 are enriched in acidic residues; it reads EESDQENLAELEEGDESG. The segment at 1007–1070 is disordered; the sequence is EESDQENLAE…CQNQPQHGGM (64 aa). A compositionally biased stretch (low complexity) spans 1025–1042; the sequence is GESTTTGTTGTTAASALS. Positions 1043–1054 are enriched in gly residues; sequence GAGGGGGGGGGM. Residues 1060–1070 are compositionally biased toward polar residues; sequence GCQNQPQHGGM.

The protein belongs to the cyclic nucleotide phosphodiesterase family. PDE4 subfamily. Monomer. It depends on a divalent metal cation as a cofactor.

The enzyme catalyses 3',5'-cyclic AMP + H2O = AMP + H(+). Its pathway is purine metabolism; 3',5'-cyclic AMP degradation; AMP from 3',5'-cyclic AMP: step 1/1. Its function is as follows. Hydrolyzes the second messenger cAMP, which is a key regulator of many important physiological processes. Vital for female fertility. Required for learning/memory. The polypeptide is 3',5'-cyclic-AMP phosphodiesterase (dnc) (Drosophila melanogaster (Fruit fly)).